The primary structure comprises 532 residues: Flavin-containing monooxygenase 1 (532 aa).

Residues 1 to 510 (MVKRVAIVGA…TRTIQESPSS (510 aa)) lie on the Lumenal side of the membrane. FAD is bound by residues 9–13 (GAGVS), E32, 40–41 (LW), and 61–62 (NS). NADP(+) is bound by residues 60–61 (SN) and 195–198 (SGTD). A helical transmembrane segment spans residues 511-531 (FETLLKLFSFLALLIAVFLIF). A topological domain (cytoplasmic) is located at residue L532.

Belongs to the FMO family. Requires FAD as cofactor. As to expression, liver.

Its subcellular location is the endoplasmic reticulum membrane. The catalysed reaction is hypotaurine + NADPH + O2 + H(+) = taurine + NADP(+) + H2O. It catalyses the reaction hypotaurine + NADH + O2 + H(+) = taurine + NAD(+) + H2O. It carries out the reaction trimethylamine + NADPH + O2 = trimethylamine N-oxide + NADP(+) + H2O. The enzyme catalyses N,N-dimethylaniline + NADPH + O2 + H(+) = N,N-dimethylaniline N-oxide + NADP(+) + H2O. Functionally, broad spectrum monooxygenase that catalyzes the oxygenation of a wide variety of nitrogen- and sulfur-containing compounds including xenobiotics. Catalyzes the S-oxygenation of hypotaurine to produce taurine, an organic osmolyte involved in cell volume regulation as well as a variety of cytoprotective and developmental processes. In vitro, catalyzes the N-oxygenation of trimethylamine (TMA) to produce trimethylamine N-oxide (TMAO) and could therefore participate to the detoxification of this compound that is generated by the action of gut microbiota from dietary precursors such as choline, choline containing compounds, betaine or L-carnitine. In Mus musculus (Mouse), this protein is Flavin-containing monooxygenase 1.